Reading from the N-terminus, the 190-residue chain is Nucleoside triphosphate pyrophosphatase (190 aa).

The active-site Proton acceptor is aspartate 69.

The protein belongs to the Maf family. The cofactor is a divalent metal cation.

It is found in the cytoplasm. The enzyme catalyses a ribonucleoside 5'-triphosphate + H2O = a ribonucleoside 5'-phosphate + diphosphate + H(+). It carries out the reaction a 2'-deoxyribonucleoside 5'-triphosphate + H2O = a 2'-deoxyribonucleoside 5'-phosphate + diphosphate + H(+). In terms of biological role, nucleoside triphosphate pyrophosphatase. May have a dual role in cell division arrest and in preventing the incorporation of modified nucleotides into cellular nucleic acids. This is Nucleoside triphosphate pyrophosphatase from Helicobacter pylori (strain P12).